A 112-amino-acid polypeptide reads, in one-letter code: Beta-defensin 126 (112 aa).

A signal peptide spans 1 to 20 (MKSLLFTLAVFMLLAQLVSG). Residues 21 to 63 (NWYVKKCLNDVGICKKKCKPEELHVKNGRAMCGKQRDCCVPAD) are in vitro binds to LPS, mediates antimicrobial activity and inhibits LPS-mediated inflammation. Disulfide bonds link cysteine 27/cysteine 58, cysteine 34/cysteine 52, and cysteine 38/cysteine 59.

It belongs to the beta-defensin family. Homodimer or homooligomer; disulfide-linked. O-glycosylated; glycans contain alpha(2,3)-linked sialic acids.

The protein localises to the secreted. Its function is as follows. Highly glycosylated atypical beta-defensin involved in several aspects of sperm function. Facilitates sperm transport in the female reproductive tract and contributes to sperm protection against immunodetection; both functions are probably implicating the negative surface charge provided by its O-linked oligosaccharides in the sperm glycocalyx. Involved in binding of sperm to oviductal epithelial cells to form a sperm reservoir until ovulation. Release from the sperm surface during capacitation and ovaluation by an elevation of oviductal fluid pH is unmasking other surface components and allows sperm to penetrate the cumulus matrix and bind to the zona pellucida of the oocyte. In vitro has antimicrobial activity and may inhibit LPS-mediated inflammation. The chain is Beta-defensin 126 (DEFB126) from Hylobates lar (Lar gibbon).